Here is a 404-residue protein sequence, read N- to C-terminus: Riboflavin biosynthesis protein RibBA (404 aa).

The interval 1-204 (MEELKLNTIE…IRDLIAYRLK (204 aa)) is DHBP synthase. D-ribulose 5-phosphate-binding positions include 30–31 (RE), aspartate 35, 143–147 (RAGHT), and glutamate 167. Glutamate 31 contributes to the Mg(2+) binding site. Histidine 146 lines the Mg(2+) pocket. The interval 205-404 (QESLVEKGVE…RMGHTLHFNK (200 aa)) is GTP cyclohydrolase II. 255–259 (RVHSS) lines the GTP pocket. The Zn(2+) site is built by cysteine 260, cysteine 271, and cysteine 273. GTP contacts are provided by residues glutamine 276, 298–300 (EGR), and threonine 320. Aspartate 332 (proton acceptor; for GTP cyclohydrolase activity) is an active-site residue. Arginine 334 acts as the Nucleophile; for GTP cyclohydrolase activity in catalysis. Positions 355 and 360 each coordinate GTP.

This sequence in the N-terminal section; belongs to the DHBP synthase family. It in the C-terminal section; belongs to the GTP cyclohydrolase II family. Mg(2+) serves as cofactor. It depends on Mn(2+) as a cofactor. Zn(2+) is required as a cofactor.

It catalyses the reaction D-ribulose 5-phosphate = (2S)-2-hydroxy-3-oxobutyl phosphate + formate + H(+). It carries out the reaction GTP + 4 H2O = 2,5-diamino-6-hydroxy-4-(5-phosphoribosylamino)-pyrimidine + formate + 2 phosphate + 3 H(+). The protein operates within cofactor biosynthesis; riboflavin biosynthesis; 2-hydroxy-3-oxobutyl phosphate from D-ribulose 5-phosphate: step 1/1. Its pathway is cofactor biosynthesis; riboflavin biosynthesis; 5-amino-6-(D-ribitylamino)uracil from GTP: step 1/4. In terms of biological role, catalyzes the conversion of D-ribulose 5-phosphate to formate and 3,4-dihydroxy-2-butanone 4-phosphate. Its function is as follows. Catalyzes the conversion of GTP to 2,5-diamino-6-ribosylamino-4(3H)-pyrimidinone 5'-phosphate (DARP), formate and pyrophosphate. This is Riboflavin biosynthesis protein RibBA from Phocaeicola vulgatus (strain ATCC 8482 / DSM 1447 / JCM 5826 / CCUG 4940 / NBRC 14291 / NCTC 11154) (Bacteroides vulgatus).